The chain runs to 234 residues: Synaptogyrin-4 (234 aa).

Residues 18-169 (FLRRPKTITR…QAYLAFQDLR (152 aa)) enclose the MARVEL domain. 4 helical membrane passes run 25–45 (ITRV…LTDG), 66–86 (CSFA…FLVL), 104–124 (LLDF…FCFL), and 145–165 (AAIA…YLAF).

Belongs to the synaptogyrin family.

The protein localises to the membrane. This Homo sapiens (Human) protein is Synaptogyrin-4 (SYNGR4).